We begin with the raw amino-acid sequence, 254 residues long: Transmembrane protein 70, mitochondrial (254 aa).

The transit peptide at 1–78 (MLFLALGGPW…PVCWERGVRC (78 aa)) directs the protein to the mitochondrion. The Mitochondrial matrix portion of the chain corresponds to 79–112 (SHTQLDKSEDGRLIYTGNLARTVFGVKCFSYSTS). Residues 113–133 (LISLAFLPYIFAQNNVIFGSL) form a helical membrane-spanning segment. Topologically, residues 134–136 (PLQ) are mitochondrial intermembrane. A helical transmembrane segment spans residues 137–157 (ILFYGTIGSFTVITPALLHFL). At 158 to 254 (TKGYVIRLYH…SEKKQLKEEK (97 aa)) the chain is on the mitochondrial matrix side.

Belongs to the TMEM70 family. Homooligomer. Interacts (homooligomer form) with ATP5MC1; this interaction facilitates the oligomer formation of subunit c/ATP5MC1 (c-ring) and the c-ring membrane insertion and also protects ATP5MC1 against intramitochondrial proteolysis. Interacts with the core subunits TMEM126B, NDUFAF1, ECSIT and ACAD9 of the MCIA complex. Interacts with ATP5MC3, TMEM242 and TIMMDC1.

The protein resides in the mitochondrion inner membrane. Its function is as follows. Scaffold protein that participates in the c-ring assembly of mitochondrial ATP synthase (F(1)F(0) ATP synthase or complex V) by facilitating the membrane insertion and oligomer formation of the subunit c/ATP5MC1 through its interaction. Therefore, participates in the early stage of mitochondrial ATP synthase biogenesis and also protects subunit c/ATP5MC1 against intramitochondrial proteolysis. In addition, binds the mitochondrial proton-transporting ATP synthase complexes I and may play a role in the stability of its membrane-bound subassemblies. This Bos taurus (Bovine) protein is Transmembrane protein 70, mitochondrial.